A 66-amino-acid chain; its full sequence is Large ribosomal subunit protein bL35 (66 aa).

Over residues 1-26 (MPKMKTHRGAAKRVKRTASGKLKRSR) the composition is skewed to basic residues. The tract at residues 1 to 49 (MPKMKTHRGAAKRVKRTASGKLKRSRAFTSHLFANKSTKQKRKLRKASL) is disordered.

The protein belongs to the bacterial ribosomal protein bL35 family.

The protein is Large ribosomal subunit protein bL35 of Staphylococcus carnosus (strain TM300).